Here is a 958-residue protein sequence, read N- to C-terminus: Glycine dehydrogenase (decarboxylating) (958 aa).

The residue at position 705 (Lys-705) is an N6-(pyridoxal phosphate)lysine.

Belongs to the GcvP family. As to quaternary structure, the glycine cleavage system is composed of four proteins: P, T, L and H. It depends on pyridoxal 5'-phosphate as a cofactor.

It carries out the reaction N(6)-[(R)-lipoyl]-L-lysyl-[glycine-cleavage complex H protein] + glycine + H(+) = N(6)-[(R)-S(8)-aminomethyldihydrolipoyl]-L-lysyl-[glycine-cleavage complex H protein] + CO2. The glycine cleavage system catalyzes the degradation of glycine. The P protein binds the alpha-amino group of glycine through its pyridoxal phosphate cofactor; CO(2) is released and the remaining methylamine moiety is then transferred to the lipoamide cofactor of the H protein. The sequence is that of Glycine dehydrogenase (decarboxylating) from Bdellovibrio bacteriovorus (strain ATCC 15356 / DSM 50701 / NCIMB 9529 / HD100).